The chain runs to 932 residues: MARHSVMYFILLSALIDKSQACFCDHYPWSQWSSCSKTCNSGTQTRQRRIVTDKYYFENFCGQLCTKQESRECNWQTCPINCRLGDYGPWSDCDPCVQKRFKVRSILRPSQFGGQPCTEPLMTFQPCIPSKLCKIEEIDCKNKFRCDSGRCIASKLECNGENDCGDNSDERNCGRKKTVCSRSHNPIPGVQLMGMGFHFLAGEPRGEVLDNSFTGGVCRTVKSSRASNPYRVPANLENVNFEVQTKEDDLEADFYDDLIPLEDNKDQEALGSGLATSSFRVPIFYSSKRSQSSSHSSAFKQAIQASQKKASSFIRIHKVIKVLNFTMKTKDLQLSDVFLKALNHLPLEYNSALYSRIFDDFGTHYFTSGSLGGVYDLLYQFSKEELKNSGLTQEEAKNCIRIETKKRFLFVKKTKVEHRCTTNKLSEKYEGSFMQGSEKSISLVQGGRSAYAAALAWEKGSPVPEERVFSDWLESVKENPSVIDFALAPITDLVRNIPCAVTRRNNLRRAFREYAAKFDPCQCARCPNSGRPVLSGTECLCVCQSGTYGENCERRSPDYKSNAVDGNWGCWSSWSSCDATYRRSRTRECNNPAPQQGGKRCEGERRQEEHCTFSIMQNDGQPCISDDEDMKETDLPELESDSGCPQPVPPENGFIRNEKKQYSVGEEVEILCFTGFKAVGYQYFRCLPDRSWRQGDVECQRTECLKPIVPEGLTLSPFQTLYKIGDSIELTCPRGLVVNGPSRYTCSGDSWTPPISDSLSCEKDVLTGLRGHCQPGQKQLGSECVCMSPEEDCGHYSEEICVLDTTSSDYFTSSACKLLAEKCLNNQQLHFVHIGSCEEGPQLKWGLERIKLSSSSTKNESCGYDTCYNWEKCSATTSKCVCLLPSQCTKGGDQLFCVQIGSSANGKTMNICEVGAVKCAKREMEILHSGRC.

Positions 1–21 (MARHSVMYFILLSALIDKSQA) are cleaved as a signal peptide. 11 disulfide bridges follow: cysteine 22-cysteine 61, cysteine 24-cysteine 65, cysteine 35-cysteine 73, cysteine 39-cysteine 78, cysteine 82-cysteine 117, cysteine 93-cysteine 127, cysteine 96-cysteine 133, cysteine 140-cysteine 151, cysteine 146-cysteine 164, cysteine 158-cysteine 173, and cysteine 180-cysteine 218. TSP type-1 domains follow at residues 22-79 (CFCD…QTCP) and 81-134 (NCRL…KLCK). C-linked (Man) tryptophan glycans are attached at residues tryptophan 29 and tryptophan 32. A glycan (O-linked (Fuc...) threonine) is linked at threonine 38. C-linked (Man) tryptophan glycosylation is present at tryptophan 90. The LDL-receptor class A domain occupies 139-174 (DCKNKFRCDSGRCIASKLECNGENDCGDNSDERNCG). Residues leucine 156, asparagine 159, glutamate 161, aspartate 163, aspartate 169, and glutamate 170 each contribute to the Ca(2+) site. One can recognise an MACPF domain in the interval 176–522 (KKTVCSRSHN…EYAAKFDPCQ (347 aa)). A beta stranded membrane pass occupies residues 278–290 (SFRVPIFYSSKRS). A glycan (N-linked (GlcNAc...) asparagine) is linked at asparagine 324. Threonine 392 carries O-linked (Fuc...) threonine glycosylation. Intrachain disulfides connect cysteine 399–cysteine 420, cysteine 499–cysteine 623, cysteine 521–cysteine 570, cysteine 523–cysteine 539, cysteine 526–cysteine 541, cysteine 543–cysteine 552, cysteine 577–cysteine 611, cysteine 589–cysteine 601, cysteine 644–cysteine 686, cysteine 672–cysteine 699, cysteine 704–cysteine 746, cysteine 732–cysteine 761, cysteine 773–cysteine 823, cysteine 784–cysteine 801, cysteine 786–cysteine 837, and cysteine 793–cysteine 816. Residues 402–415 (IETKKRFLFVKKTK) form a beta stranded membrane-spanning segment. The region spanning 523–553 (CARCPNSGRPVLSGTECLCVCQSGTYGENCE) is the EGF-like domain. Residues 565–612 (DGNWGCWSSWSSCDATYRRSRTRECNNPAPQQGGKRCEGERRQEEHCT) enclose the TSP type-1 3 domain. C-linked (Man) tryptophan glycosylation is found at tryptophan 568, tryptophan 571, and tryptophan 574. 2 CCP regions span residues 611–688 (CTFS…RCLP) and 689–765 (DRSW…EKDV). Sushi domains are found at residues 642–701 (SGCP…ECQR) and 702–763 (TECL…SCEK). The segment at 642–932 (SGCPQPVPPE…EMEILHSGRC (291 aa)) is C5b-binding domain. 2 factor I module (FIM) regions span residues 766-840 (LTGL…CEEG) and 858-932 (KNES…SGRC). One can recognise a Kazal-like 1 domain in the interval 780–839 (LGSECVCMSPEEDCGHYSEEICVLDTTSSDYFTSSACKLLAEKCLNNQQLHFVHIGSCEE). Asparagine 859 is a glycosylation site (N-linked (GlcNAc...) asparagine). Intrachain disulfides connect cysteine 862–cysteine 873, cysteine 867–cysteine 919, cysteine 880–cysteine 897, cysteine 882–cysteine 932, and cysteine 888–cysteine 912. Positions 876-932 (TTSKCVCLLPSQCTKGGDQLFCVQIGSSANGKTMNICEVGAVKCAKREMEILHSGRC) constitute a Kazal-like 2 domain.

The protein belongs to the complement C6/C7/C8/C9 family. In terms of assembly, component of the membrane attack complex (MAC), composed of complement C5b, C6, C7, C8A, C8B, C8G and multiple copies of the pore-forming subunit C9. All cysteine residues are assumed to be cross-linked to one another. Individual modules containing an even number of conserved cysteine residues are supposed to have disulfide linkages only within the same module.

It is found in the secreted. The protein resides in the target cell membrane. With respect to regulation, membrane attack complex (MAC) assembly is inhibited by CD59, thereby protecting self-cells from damage during complement activation. MAC assembly is also inhibited by clusterin (CLU) chaperones that inhibit polymerization of C9. In terms of biological role, component of the membrane attack complex (MAC), a multiprotein complex activated by the complement cascade, which inserts into a target cell membrane and forms a pore, leading to target cell membrane rupture and cell lysis. The MAC is initiated by proteolytic cleavage of C5 into complement C5b in response to the classical, alternative, lectin and GZMK complement pathways. The complement pathways consist in a cascade of proteins that leads to phagocytosis and breakdown of pathogens and signaling that strengthens the adaptive immune system. Together with component C5b, involved in MAC complex assembly: complement C5b and C6 associate with the outer leaflet of target cell membrane, reducing the energy for membrane bending. The chain is Complement component C6 (C6) from Bos taurus (Bovine).